Here is a 103-residue protein sequence, read N- to C-terminus: Protamine-2 (103 aa).

The interval 1–103 (MVRYRTRSLS…RTRRRRCRRY (103 aa)) is disordered. 2 positions are modified to phosphoserine: S8 and S10. Residues 8–17 (SLSERPHEVH) are compositionally biased toward basic and acidic residues. Residues 18 to 29 (GQQVHGQDQGHN) are compositionally biased toward low complexity. S37 is modified (phosphoserine). Residues 39–48 (EHVEVYERTH) are compositionally biased toward basic and acidic residues. Positions 49–103 (QGHSHHRRRRCSQRRLHRIHRRRHRSCRRRRRRSCRHRRRHRRGCRTRRRRCRRY) are enriched in basic residues.

The protein belongs to the protamine P2 family. As to quaternary structure, interacts with TDRP. In terms of processing, proteolytic processing into mature chains is required for histone eviction during spermatogenesis. Transition proteins (TNP1 and TNP2) are required for processing. As to expression, testis.

It is found in the nucleus. It localises to the chromosome. Protamines substitute for histones in the chromatin of sperm during the haploid phase of spermatogenesis. They compact sperm DNA into a highly condensed, stable and inactive complex. The protein is Protamine-2 (PRM2) of Erythrocebus patas (Red guenon).